The primary structure comprises 428 residues: Chaperone SurA (428 aa).

The N-terminal stretch at 1-13 is a signal peptide; sequence MLGALLLSGAVHA. PpiC domains are found at residues 164-265 and 276-375; these read SEEF…KLLE and RDEV…EVLG.

Its subcellular location is the periplasm. The enzyme catalyses [protein]-peptidylproline (omega=180) = [protein]-peptidylproline (omega=0). Its function is as follows. Chaperone involved in the correct folding and assembly of outer membrane proteins. Recognizes specific patterns of aromatic residues and the orientation of their side chains, which are found more frequently in integral outer membrane proteins. May act in both early periplasmic and late outer membrane-associated steps of protein maturation. This is Chaperone SurA from Pseudomonas syringae pv. tomato (strain ATCC BAA-871 / DC3000).